The primary structure comprises 375 residues: Tyrosine--tRNA ligase (375 aa).

Positions 37, 168, 172, 175, and 190 each coordinate L-tyrosine. Positions 251–255 (KMSKS) match the 'KMSKS' region motif. Residue K254 coordinates ATP.

It belongs to the class-I aminoacyl-tRNA synthetase family. TyrS type 4 subfamily. As to quaternary structure, homodimer.

The protein localises to the cytoplasm. The catalysed reaction is tRNA(Tyr) + L-tyrosine + ATP = L-tyrosyl-tRNA(Tyr) + AMP + diphosphate + H(+). Catalyzes the attachment of tyrosine to tRNA(Tyr) in a two-step reaction: tyrosine is first activated by ATP to form Tyr-AMP and then transferred to the acceptor end of tRNA(Tyr). The chain is Tyrosine--tRNA ligase from Thermococcus kodakarensis (strain ATCC BAA-918 / JCM 12380 / KOD1) (Pyrococcus kodakaraensis (strain KOD1)).